Consider the following 136-residue polypeptide: ATP synthase epsilon chain (136 aa).

The protein belongs to the ATPase epsilon chain family. As to quaternary structure, F-type ATPases have 2 components, CF(1) - the catalytic core - and CF(0) - the membrane proton channel. CF(1) has five subunits: alpha(3), beta(3), gamma(1), delta(1), epsilon(1). CF(0) has three main subunits: a, b and c.

The protein localises to the cell membrane. Produces ATP from ADP in the presence of a proton gradient across the membrane. The chain is ATP synthase epsilon chain from Macrococcus caseolyticus (strain JCSC5402) (Macrococcoides caseolyticum).